The sequence spans 201 residues: Large ribosomal subunit protein uL4 (201 aa).

A disordered region spans residues 46 to 71 (QKTRAEVVGSGKKPWRQKGTGRARAG).

Belongs to the universal ribosomal protein uL4 family. Part of the 50S ribosomal subunit.

Its function is as follows. One of the primary rRNA binding proteins, this protein initially binds near the 5'-end of the 23S rRNA. It is important during the early stages of 50S assembly. It makes multiple contacts with different domains of the 23S rRNA in the assembled 50S subunit and ribosome. Forms part of the polypeptide exit tunnel. The chain is Large ribosomal subunit protein uL4 from Shewanella woodyi (strain ATCC 51908 / MS32).